Consider the following 51-residue polypeptide: Methionine aminopeptidase (51 aa).

Belongs to the peptidase M24A family. Methionine aminopeptidase type 1 subfamily. In terms of assembly, monomer. Co(2+) serves as cofactor. It depends on Zn(2+) as a cofactor. Requires Mn(2+) as cofactor. The cofactor is Fe(2+).

It carries out the reaction Release of N-terminal amino acids, preferentially methionine, from peptides and arylamides.. In terms of biological role, removes the N-terminal methionine from nascent proteins. The N-terminal methionine is often cleaved when the second residue in the primary sequence is small and uncharged (Met-Ala-, Cys, Gly, Pro, Ser, Thr, or Val). Requires deformylation of the N(alpha)-formylated initiator methionine before it can be hydrolyzed. This chain is Methionine aminopeptidase (map), found in Geobacillus stearothermophilus (Bacillus stearothermophilus).